Consider the following 43-residue polypeptide: Potassium channel toxin gamma-KTx 4.2 (43 aa).

Intrachain disulfides connect Cys-5-Cys-23, Cys-11-Cys-34, Cys-20-Cys-39, and Cys-24-Cys-41.

It belongs to the ergtoxin family. Gamma-KTx 4 subfamily. As to expression, expressed by the venom gland.

The protein localises to the secreted. In terms of biological role, reversibly blocks Kv11/ERG potassium channels. In Centruroides noxius (Mexican scorpion), this protein is Potassium channel toxin gamma-KTx 4.2.